The chain runs to 265 residues: Apolipoprotein A-I (265 aa).

An N-terminal signal peptide occupies residues 1-16 (MKAAVLIWLFLMGSQA). Tandem repeats lie at residues 66 to 87 (LKLL…EQLG) and 88 to 109 (PVTQ…QEMS). The tract at residues 66–265 (LKLLDNWDSL…EEYTKKLSSQ (200 aa)) is 10 X approximate tandem repeats. A Methionine sulfoxide modification is found at M108. The stretch at 110–120 (KDLEEVKAQVQ) is one 3; half-length repeat. 5 repeat units span residues 121–142 (PYLD…QKLE), 143–164 (PLRT…EKLS), 165–186 (PLAE…TQLA), 187–208 (PYSD…ENSG), and 209–230 (ASLA…EKAK). M134 is subject to Methionine sulfoxide. The stretch at 231-241 (PALDDLRQGLL) is one 9; half-length repeat. The stretch at 242-265 (PVLESFKVSFLSALEEYTKKLSSQ) is repeat 10.

Belongs to the apolipoprotein A1/A4/E family. Homodimer. Interacts with APOA1BP and CLU. Component of a sperm activating protein complex (SPAP), consisting of APOA1, an immunoglobulin heavy chain, an immunoglobulin light chain and albumin. Interacts with NDRG1. Interacts with SCGB3A2. Interacts with NAXE and YJEFN3. Glycosylated. Post-translationally, palmitoylated. In terms of processing, phosphorylation sites are present in the extracellular medium.

The protein localises to the secreted. In terms of biological role, participates in the reverse transport of cholesterol from tissues to the liver for excretion by promoting cholesterol efflux from tissues and by acting as a cofactor for the lecithin cholesterol acyltransferase (LCAT). As part of the SPAP complex, activates spermatozoa motility. The protein is Apolipoprotein A-I (APOA1) of Aotus nancymaae (Ma's night monkey).